The following is a 536-amino-acid chain: Interferon alpha/beta receptor 2 (536 aa).

The N-terminal stretch at 1–26 (MLLSQNVSAIGPLNLYPMVHISLVFG) is a signal peptide. At 27 to 246 (ISYVVPDLSD…RESESSEPAT (220 aa)) the chain is on the extracellular side. Cystine bridges form between Cys-39–Cys-122 and Cys-85–Cys-93. N-linked (GlcNAc...) asparagine glycans are attached at residues Asn-58, Asn-87, Asn-101, Asn-147, and Asn-191. An intrachain disulfide couples Cys-210 to Cys-230. A helical transmembrane segment spans residues 247–267 (IGGILILFLLAAVCISTVMIL). Over 268–536 (KRIGYICLRN…VRQVNLKNFN (269 aa)) the chain is Cytoplasmic. Residue Tyr-340 is modified to Phosphotyrosine. 3 repeat units span residues 358-362 (SLEDC), 363-367 (SLEDC), and 368-372 (SLEDC). The segment at 358 to 372 (SLEDCSLEDCSLEDC) is 3 X 5 AA tandem repeats of S-L-E-D-C. The segment at 369–434 (LEDCSDPSAE…SDSTEGSEGR (66 aa)) is disordered. The span at 420-429 (TSEEDSDSTE) shows a compositional bias: acidic residues. A mediates interaction with STAT2 (and required for the recruitment of USP18) region spans residues 432-456 (EGRIVFNVNLNSVCVRALEDDKDSE). Residue Ser-480 is modified to Phosphoserine. Residues 487–522 (EEGTQLPFTDPSMECLRPQDALSDKSDTSESDVDIG) are disordered. The residue at position 525 (Tyr-525) is a Phosphotyrosine.

The protein belongs to the type II cytokine receptor family. As to quaternary structure, heterodimer with IFNAR1; forming the receptor for type I interferon. Interacts with the transcriptional factors STAT1 and STAT2. Interacts with JAK1. Interacts with USP18; indirectly via STAT2, it negatively regulates the assembly of the ternary interferon-IFNAR1-IFNAR2 complex and therefore type I interferon signaling. In terms of processing, phosphorylated on tyrosine residues upon interferon binding. Phosphorylation at Tyr-340 or Tyr-525 are sufficient to mediate interferon dependent activation of STAT1, STAT2 and STAT3 leading to antiproliferative effects on many different cell types. Expressed in the endometrium. Expressed in all tissues examined except conceptus at day 15 of pregnancy.

It localises to the cell membrane. Its function is as follows. Together with IFNAR1, forms the heterodimeric receptor for type I interferons (including interferons alpha, beta, epsilon, omega and kappa). Type I interferon binding activates the JAK-STAT signaling cascade, resulting in transcriptional activation or repression of interferon-regulated genes that encode the effectors of the interferon response. Mechanistically, type I interferon-binding brings the IFNAR1 and IFNAR2 subunits into close proximity with one another, driving their associated Janus kinases (JAKs) (TYK2 bound to IFNAR1 and JAK1 bound to IFNAR2) to cross-phosphorylate one another. The activated kinases phosphorylate specific tyrosine residues on the intracellular domains of IFNAR1 and IFNAR2, forming docking sites for the STAT transcription factors (STAT1, STAT2 and STAT). STAT proteins are then phosphorylated by the JAKs, promoting their translocation into the nucleus to regulate expression of interferon-regulated genes. The sequence is that of Interferon alpha/beta receptor 2 (IFNAR2) from Ovis aries (Sheep).